Here is a 543-residue protein sequence, read N- to C-terminus: Zinc finger protein 280B (543 aa).

N-acetylmethionine is present on methionine 1. A compositionally biased stretch (acidic residues) spans methionine 1–glutamate 10. Residues methionine 1 to valine 23 form a disordered region. 2 positions are modified to phosphoserine: serine 68 and serine 70. Positions serine 105 to serine 138 are disordered. The span at asparagine 128–serine 138 shows a compositional bias: low complexity. Residues lysine 173, lysine 247, and lysine 261 each participate in a glycyl lysine isopeptide (Lys-Gly) (interchain with G-Cter in SUMO2) cross-link. C2H2-type zinc fingers lie at residues threonine 343–histidine 366, threonine 373–histidine 396, leucine 432–histidine 454, and histidine 460–histidine 483. The interval alanine 518–histidine 543 is disordered. Positions serine 534–histidine 543 are enriched in basic residues.

It is found in the nucleus. Its function is as follows. May function as a transcription factor. The polypeptide is Zinc finger protein 280B (ZNF280B) (Homo sapiens (Human)).